The sequence spans 674 residues: Probable copper-transporting P-type ATPase B (674 aa).

A disordered region spans residues 1–22; it reads MNHSNQMHHDNHASHDHHSGHA. A compositionally biased stretch (basic and acidic residues) spans 7-19; that stretch reads MHHDNHASHDHHS. 6 consecutive transmembrane segments (helical) span residues 32 to 52, 57 to 77, 95 to 115, 127 to 147, 284 to 304, and 315 to 335; these read FFVS…MGVN, FTFP…FFYG, GMMT…LYAF, TMDF…GHWI, GYLF…WMLI, and LVTV…PLVT. The active-site 4-aspartylphosphate intermediate is the Asp-367. Asp-565 and Asp-569 together coordinate Mg(2+). The next 2 membrane-spanning stretches (helical) occupy residues 623–645 and 649–671; these read LWWG…AFIG and SPAI…AFTL.

It belongs to the cation transport ATPase (P-type) (TC 3.A.3) family. Type IB subfamily.

It is found in the cell membrane. The catalysed reaction is Cu(+)(in) + ATP + H2O = Cu(+)(out) + ADP + phosphate + H(+). Involved in copper transport. The protein is Probable copper-transporting P-type ATPase B (copB) of Staphylococcus aureus (strain USA300 / TCH1516).